The following is a 520-amino-acid chain: GMP synthase [glutamine-hydrolyzing] (520 aa).

Residues 12-205 (KIIVLDYGSQ…AISICGARGD (194 aa)) form the Glutamine amidotransferase type-1 domain. Cysteine 89 serves as the catalytic Nucleophile. Catalysis depends on residues histidine 179 and glutamate 181. In terms of domain architecture, GMPS ATP-PPase spans 206-395 (WSMDNFIDME…LGMPEEIVWR (190 aa)). 233–239 (SGGVDSS) is a binding site for ATP.

In terms of assembly, homodimer.

It catalyses the reaction XMP + L-glutamine + ATP + H2O = GMP + L-glutamate + AMP + diphosphate + 2 H(+). It participates in purine metabolism; GMP biosynthesis; GMP from XMP (L-Gln route): step 1/1. Its function is as follows. Catalyzes the synthesis of GMP from XMP. The chain is GMP synthase [glutamine-hydrolyzing] from Streptococcus pyogenes serotype M6 (strain ATCC BAA-946 / MGAS10394).